We begin with the raw amino-acid sequence, 976 residues long: Ubiquitin ligase-binding protein BUL1 (976 aa).

A disordered region spans residues 1–65; it reads MAKDLNDSGF…SPSLHSPKSW (65 aa). Residues 23–39 are compositionally biased toward polar residues; that stretch reads SDFTANSSTTMNVNANT. A compositionally biased stretch (low complexity) spans 53–64; sequence SSRSPSLHSPKS. Ser58 and Ser70 each carry phosphoserine. Disordered stretches follow at residues 82–124, 145–196, and 857–878; these read LAHS…DGDI, PQGN…SSST, and SEDSISHTGNGSSSSPSSASLT. The PY-motif motif lies at 156–160; that stretch reads FPPSY. Over residues 163 to 176 the composition is skewed to low complexity; it reads ANNSTATGAAGSSA. Over residues 177 to 196 the composition is skewed to polar residues; it reads DLSHQSLSTDALGATRSSST. A compositionally biased stretch (low complexity) spans 862–878; sequence SHTGNGSSSSPSSASLT.

The protein belongs to the BUL1 family. In terms of assembly, component of the RSP5-BUL1/2 ubiquitin ligase complex composed of at least RSP5 and BUL1 or BUL2.

The protein localises to the cytoplasm. The protein operates within protein modification; protein ubiquitination. In terms of biological role, component of a RSP5 ubiquitin ligase complex which specifies polyubiquitination and intracellular trafficking of the general amino acid permease GAP1 as well as other permeases such as PMA1. The RSP5-BUL1/2 complex is also necessary for the heat-shock element (HSE)-mediated gene expression, nitrogen starvation GLN3-dependent transcription and pressure-induced differential regulation of the 2 tryptophan permeases TAT1 and TAT2. This Saccharomyces cerevisiae (strain ATCC 204508 / S288c) (Baker's yeast) protein is Ubiquitin ligase-binding protein BUL1 (BUL1).